Here is a 106-residue protein sequence, read N- to C-terminus: Small ribosomal subunit protein uS10 (106 aa).

It belongs to the universal ribosomal protein uS10 family. As to quaternary structure, part of the 30S ribosomal subunit.

In terms of biological role, involved in the binding of tRNA to the ribosomes. This chain is Small ribosomal subunit protein uS10, found in Pyrobaculum islandicum (strain DSM 4184 / JCM 9189 / GEO3).